We begin with the raw amino-acid sequence, 355 residues long: Peptide chain release factor 1 (355 aa).

Q233 carries the N5-methylglutamine modification.

It belongs to the prokaryotic/mitochondrial release factor family. Methylated by PrmC. Methylation increases the termination efficiency of RF1.

Its subcellular location is the cytoplasm. Functionally, peptide chain release factor 1 directs the termination of translation in response to the peptide chain termination codons UAG and UAA. This chain is Peptide chain release factor 1, found in Rickettsia typhi (strain ATCC VR-144 / Wilmington).